The sequence spans 261 residues: MAAISTCQTVIPLPIPVFFNQQFPTLVDICARWQLVFDADAPFELRFESDTLTLHKRDEPKLDGIIVDFVTGAVAHRRKFGGGRGQSIAKAVGLKQGVTPKVVDGTAGLGRDAFVLASLGCTVTMVERHPVVAALLEDGLRRAYQDAEIGDWMRERMQLFHGSSLEALAKLEQEVDVVYLDPMYPHRDKSALVKKEMRVFQTLVGADLDADGLLAPAMALASKRVVVKRPDYAEDLAGVKPSMVIETKKNRFDVYVKSAMK.

S-adenosyl-L-methionine-binding positions include 111–112 (RD), 127–128 (ER), 163–164 (SS), and Asp181.

Belongs to the methyltransferase superfamily. RsmJ family.

It localises to the cytoplasm. The enzyme catalyses guanosine(1516) in 16S rRNA + S-adenosyl-L-methionine = N(2)-methylguanosine(1516) in 16S rRNA + S-adenosyl-L-homocysteine + H(+). In terms of biological role, specifically methylates the guanosine in position 1516 of 16S rRNA. The protein is Ribosomal RNA small subunit methyltransferase J of Shewanella sp. (strain MR-7).